The following is a 435-amino-acid chain: MEAKLEVTGKEVIKPASPSPRDRLQLSILDLYCPGIYVSTIFFYDLITESSEVFSENLKLSLSETLSRFYPLAGRIEGLSISCNDEGAVFTEARTDLLLPDFLRNLNTDSLSGFLPTLAAGESPAAWPLLSVKVTFFGSGSGVAVSVSVSHKICDIASLVTFVKDWATTTAKGKSNSTIEFAETTIYPPPPSHMYEQFPSTDSDSNITSKYVLKRFVFEPSKIAELKHKAASESVPVPTRVEAIMSLIWRCARNSSRSNLLIPRQAVMWQAMDIRLRIPSSVAPKDVIGNLQSGFSLKKDAESEFEIPEIVATFRKNKERVNEMIKESLQGNTIGQSLLSLMAETVSESTEIDRYIMSSWCRKPFYEVDFGSGSPVWVGYASHTIYDNMVGVVLIDSKEGDGVEAWISLPEEDMSVFVDDQELLAYAVLNPPVVA.

Active-site proton acceptor residues include H151 and D369.

The protein belongs to the plant acyltransferase family. Mostly expressed in roots (particularly in the root elongation zone), and, to a lower extent, in seedling, leaves (especially in hydathodes), siliques (e.g. in developing seeds) and flowers.

Its subcellular location is the cytoplasm. Functionally, monitors brassinosteroids (BR) responses and homeostasis, particularly in the root and hypocotyl in darkness. Promotes flavonoid biosynthesis. The chain is BAHD acyltransferase BIA1 from Arabidopsis thaliana (Mouse-ear cress).